Reading from the N-terminus, the 503-residue chain is Nuclear respiratory factor 1 (503 aa).

A dimerization region spans residues 1 to 78 (MEEHGVTQTE…AHLAAAGPVG (78 aa)). The interval 36-57 (SMLSADEDSPSSPEDTSYDDSD) is disordered. A phosphoserine; by CK2 mark is found at serine 39, serine 44, serine 46, serine 47, and serine 52. A Nuclear localization signal motif is present at residues 88 to 116 (GKKRKRPHVFESNPSIRKRQQTRLLRKLR). The DNA-binding element occupies 109-305 (TRLLRKLRAT…SIAHLVPSQT (197 aa)). Residue lysine 139 forms a Glycyl lysine isopeptide (Lys-Gly) (interchain with G-Cter in SUMO2) linkage. A required for transcriptional activation region spans residues 301-476 (VPSQTVVQTF…AQGNGPVQVA (176 aa)).

This sequence belongs to the NRF1/Ewg family. In terms of assembly, homodimer. Binds DNA as a dimer. Interacts with PPRC1. In terms of processing, phosphorylation enhances DNA binding. As to expression, ubiquitously expressed with strongest expression in skeletal muscle.

Its subcellular location is the nucleus. Functionally, transcription factor that activates the expression of the EIF2S1 (EIF2-alpha) gene. Links the transcriptional modulation of key metabolic genes to cellular growth and development. Implicated in the control of nuclear genes required for respiration, heme biosynthesis, and mitochondrial DNA transcription and replication. The chain is Nuclear respiratory factor 1 (NRF1) from Homo sapiens (Human).